Consider the following 225-residue polypeptide: UPF0758 protein Sfri_3828 (225 aa).

The MPN domain occupies 102-224; it reads ILTNPDLTRD…IVSFAERGWI (123 aa). Zn(2+) contacts are provided by His-173, His-175, and Asp-186. Positions 173 to 186 match the JAMM motif motif; the sequence is HNHPSGIAEPSQAD.

Belongs to the UPF0758 family.

In Shewanella frigidimarina (strain NCIMB 400), this protein is UPF0758 protein Sfri_3828.